The following is a 514-amino-acid chain: MTDKLIIFDTTLRDGEQSPGASMTKEEKIRIAKNLERMKVDVIEAGFAASSNGDFDAIHTIAGLVKDSTICSLARANDKDIQRAADALKPANSFRIHTFIATSPLHMEKKLRMTPDQVFEQARLAVRFARKFTDNVEFSPEDGSRSDMDFLCRVLEAVIAEGATTINIADTVGYGVPELYGNLVKTLRERIPNSDKAIFSVHCHNDLGMAVANSLAGVKIGGARQVECTINGLGERAGNTSLEEIVMAVKTRKDYFGLDVGIDTSQIVPTSKLVSQITGFVVQPNKAVVGANAFAHASGIHQDGVLKARDTYEIMRAEDVGWTANKIVLGKLSGRNAFKQRLQELGVSLDSEAELNAAFMRFKDLADRKAEIFDEDIIAIVSEESALAQEQEHFKFVSLSQRSETGEQPQAKVVFAVEGKEVTGEARGNGPVDATFNAIEGEVGSGSELLLYSVNAITTGTQAQGEVTVRLSKSGRIVNGVGTDPDIVAASAKAYISALNKLHSKDDKVNPQRS.

A Pyruvate carboxyltransferase domain is found at 5–268 (LIIFDTTLRD…DVGIDTSQIV (264 aa)). Mn(2+)-binding residues include aspartate 14, histidine 202, histidine 204, and asparagine 239. Positions 395-514 (KFVSLSQRSE…KDDKVNPQRS (120 aa)) are regulatory domain.

This sequence belongs to the alpha-IPM synthase/homocitrate synthase family. LeuA type 1 subfamily. In terms of assembly, homodimer. It depends on Mn(2+) as a cofactor.

The protein localises to the cytoplasm. It carries out the reaction 3-methyl-2-oxobutanoate + acetyl-CoA + H2O = (2S)-2-isopropylmalate + CoA + H(+). It participates in amino-acid biosynthesis; L-leucine biosynthesis; L-leucine from 3-methyl-2-oxobutanoate: step 1/4. Functionally, catalyzes the condensation of the acetyl group of acetyl-CoA with 3-methyl-2-oxobutanoate (2-ketoisovalerate) to form 3-carboxy-3-hydroxy-4-methylpentanoate (2-isopropylmalate). This is 2-isopropylmalate synthase from Burkholderia cenocepacia (strain ATCC BAA-245 / DSM 16553 / LMG 16656 / NCTC 13227 / J2315 / CF5610) (Burkholderia cepacia (strain J2315)).